The primary structure comprises 213 residues: Thymidylate kinase (213 aa).

Residue 10 to 17 coordinates ATP; the sequence is GLEGAGKT.

It belongs to the thymidylate kinase family.

It catalyses the reaction dTMP + ATP = dTDP + ADP. Phosphorylation of dTMP to form dTDP in both de novo and salvage pathways of dTTP synthesis. In Escherichia coli O1:K1 / APEC, this protein is Thymidylate kinase.